Here is a 166-residue protein sequence, read N- to C-terminus: Putative 4-hydroxy-4-methyl-2-oxoglutarate aldolase 1 (166 aa).

A2 is subject to N-acetylalanine. Residues 81–84 and R103 each bind substrate; that span reads GGNP. Position 104 (D104) interacts with a divalent metal cation.

Belongs to the class II aldolase/RraA-like family. As to quaternary structure, homotrimer. A divalent metal cation is required as a cofactor.

It carries out the reaction 4-hydroxy-4-methyl-2-oxoglutarate = 2 pyruvate. The catalysed reaction is oxaloacetate + H(+) = pyruvate + CO2. Its function is as follows. Catalyzes the aldol cleavage of 4-hydroxy-4-methyl-2-oxoglutarate (HMG) into 2 molecules of pyruvate. Also contains a secondary oxaloacetate (OAA) decarboxylase activity due to the common pyruvate enolate transition state formed following C-C bond cleavage in the retro-aldol and decarboxylation reactions. In Arabidopsis thaliana (Mouse-ear cress), this protein is Putative 4-hydroxy-4-methyl-2-oxoglutarate aldolase 1.